The primary structure comprises 493 residues: Sulfoacetaldehyde dehydrogenase (acylating) (493 aa).

Basic residues predominate over residues 1–10; sequence MSVQILHRRQ. The interval 1–21 is disordered; the sequence is MSVQILHRRQSNNSDLPLPTA. The active-site Nucleophile is cysteine 273.

Belongs to the aldehyde dehydrogenase family. As to quaternary structure, homodimer.

The protein localises to the cytoplasm. It catalyses the reaction sulfoacetaldehyde + NADP(+) + CoA = sulfoacetyl-CoA + NADPH + H(+). Its function is as follows. Involved in the degradation of sulfoacetate, a widespread natural product. Catalyzes the conversion of sulfoacetyl-CoA and NADPH to sulfoacetaldehyde, CoA and NADP(+). Specific for NADP(+) and sulfoacetaldehyde. This is Sulfoacetaldehyde dehydrogenase (acylating) from Cupriavidus necator (strain ATCC 17699 / DSM 428 / KCTC 22496 / NCIMB 10442 / H16 / Stanier 337) (Ralstonia eutropha).